The primary structure comprises 367 residues: Glutamate 5-kinase (367 aa).

Residue lysine 10 coordinates ATP. Serine 50, aspartate 137, and asparagine 149 together coordinate substrate. Residues 169-170 (TD) and 211-217 (TGGMGTK) each bind ATP. One can recognise a PUA domain in the interval 275–353 (AGEITVDAGA…QQIDAILGYE (79 aa)).

Belongs to the glutamate 5-kinase family.

It is found in the cytoplasm. It catalyses the reaction L-glutamate + ATP = L-glutamyl 5-phosphate + ADP. The protein operates within amino-acid biosynthesis; L-proline biosynthesis; L-glutamate 5-semialdehyde from L-glutamate: step 1/2. Catalyzes the transfer of a phosphate group to glutamate to form L-glutamate 5-phosphate. In Klebsiella pneumoniae subsp. pneumoniae (strain ATCC 700721 / MGH 78578), this protein is Glutamate 5-kinase.